The primary structure comprises 661 residues: UvrABC system protein B (661 aa).

The Helicase ATP-binding domain occupies 25–182 (AGLSSKKRSQ…NDLINLQYER (158 aa)). An ATP-binding site is contributed by 38-45 (GITGSGKT). The Beta-hairpin signature appears at 91–114 (YYDYYQPEAYIARTDTFIEKDSSI). The region spanning 430 to 592 (QIEDLISEIQ…IIPKTINRTI (163 aa)) is the Helicase C-terminal domain. The 36-residue stretch at 621–656 (KTHIDKLKKEMLKAASNLEFEQAAKLRDQLKTLEEA) folds into the UVR domain.

It belongs to the UvrB family. Forms a heterotetramer with UvrA during the search for lesions. Interacts with UvrC in an incision complex.

Its subcellular location is the cytoplasm. Its function is as follows. The UvrABC repair system catalyzes the recognition and processing of DNA lesions. A damage recognition complex composed of 2 UvrA and 2 UvrB subunits scans DNA for abnormalities. Upon binding of the UvrA(2)B(2) complex to a putative damaged site, the DNA wraps around one UvrB monomer. DNA wrap is dependent on ATP binding by UvrB and probably causes local melting of the DNA helix, facilitating insertion of UvrB beta-hairpin between the DNA strands. Then UvrB probes one DNA strand for the presence of a lesion. If a lesion is found the UvrA subunits dissociate and the UvrB-DNA preincision complex is formed. This complex is subsequently bound by UvrC and the second UvrB is released. If no lesion is found, the DNA wraps around the other UvrB subunit that will check the other stand for damage. The polypeptide is UvrABC system protein B (Rickettsia massiliae (strain Mtu5)).